Reading from the N-terminus, the 171-residue chain is Large ribosomal subunit protein bL9 (171 aa).

It belongs to the bacterial ribosomal protein bL9 family.

Its function is as follows. Binds to the 23S rRNA. The polypeptide is Large ribosomal subunit protein bL9 (Rickettsia peacockii (strain Rustic)).